Here is a 364-residue protein sequence, read N- to C-terminus: Aminomethyltransferase (364 aa).

It belongs to the GcvT family. In terms of assembly, the glycine cleavage system is composed of four proteins: P, T, L and H.

It catalyses the reaction N(6)-[(R)-S(8)-aminomethyldihydrolipoyl]-L-lysyl-[protein] + (6S)-5,6,7,8-tetrahydrofolate = N(6)-[(R)-dihydrolipoyl]-L-lysyl-[protein] + (6R)-5,10-methylene-5,6,7,8-tetrahydrofolate + NH4(+). The glycine cleavage system catalyzes the degradation of glycine. The protein is Aminomethyltransferase of Escherichia coli O6:H1 (strain CFT073 / ATCC 700928 / UPEC).